Consider the following 428-residue polypeptide: D-inositol 3-phosphate glycosyltransferase (428 aa).

H17 lines the 1D-myo-inositol 3-phosphate pocket. Residues 23–24 (QP) and G31 each bind UDP-N-acetyl-alpha-D-glucosamine. 1D-myo-inositol 3-phosphate-binding positions include 28 to 33 (DAGGMN), R86, Y119, T143, and R163. R237 and K242 together coordinate UDP-N-acetyl-alpha-D-glucosamine. Mg(2+) is bound by residues Y312, R313, and A315. Residues E325 and E333 each coordinate UDP-N-acetyl-alpha-D-glucosamine. Mg(2+) is bound at residue T339.

The protein belongs to the glycosyltransferase group 1 family. MshA subfamily. As to quaternary structure, homodimer.

It carries out the reaction 1D-myo-inositol 3-phosphate + UDP-N-acetyl-alpha-D-glucosamine = 1D-myo-inositol 2-acetamido-2-deoxy-alpha-D-glucopyranoside 3-phosphate + UDP + H(+). Its function is as follows. Catalyzes the transfer of a N-acetyl-glucosamine moiety to 1D-myo-inositol 3-phosphate to produce 1D-myo-inositol 2-acetamido-2-deoxy-glucopyranoside 3-phosphate in the mycothiol biosynthesis pathway. The protein is D-inositol 3-phosphate glycosyltransferase of Thermobispora bispora (strain ATCC 19993 / DSM 43833 / CBS 139.67 / JCM 10125 / KCTC 9307 / NBRC 14880 / R51).